Consider the following 560-residue polypeptide: Membrane protein insertase YidC (560 aa).

The chain crosses the membrane as a helical span at residues 7-27 (ILIVALAIVSYVMVLKWNQDY). Positions 38-56 (ASSTTTSGLPDTATGNNAA) are enriched in polar residues. Residues 38–76 (ASSTTTSGLPDTATGNNAAASDDIPRAASDTSAPAETPV) form a disordered region. 4 helical membrane passes run 367–387 (IVGN…GIFF), 437–457 (LGGC…YWVL), 468–488 (FMLW…PIIM), and 515–535 (PIIF…YWVV).

The protein belongs to the OXA1/ALB3/YidC family. Type 1 subfamily. Interacts with the Sec translocase complex via SecD. Specifically interacts with transmembrane segments of nascent integral membrane proteins during membrane integration.

Its subcellular location is the cell inner membrane. Its function is as follows. Required for the insertion and/or proper folding and/or complex formation of integral membrane proteins into the membrane. Involved in integration of membrane proteins that insert both dependently and independently of the Sec translocase complex, as well as at least some lipoproteins. Aids folding of multispanning membrane proteins. This is Membrane protein insertase YidC from Pseudomonas fluorescens (strain Pf0-1).